The primary structure comprises 525 residues: Glutamate--cysteine ligase (525 aa).

This sequence belongs to the glutamate--cysteine ligase type 1 family. Type 1 subfamily.

The enzyme catalyses L-cysteine + L-glutamate + ATP = gamma-L-glutamyl-L-cysteine + ADP + phosphate + H(+). It participates in sulfur metabolism; glutathione biosynthesis; glutathione from L-cysteine and L-glutamate: step 1/2. The polypeptide is Glutamate--cysteine ligase (Pseudoalteromonas translucida (strain TAC 125)).